We begin with the raw amino-acid sequence, 328 residues long: Tetraacyldisaccharide 4'-kinase (328 aa).

55 to 62 (TVGGNGKT) lines the ATP pocket.

It belongs to the LpxK family.

It catalyses the reaction a lipid A disaccharide + ATP = a lipid IVA + ADP + H(+). It functions in the pathway glycolipid biosynthesis; lipid IV(A) biosynthesis; lipid IV(A) from (3R)-3-hydroxytetradecanoyl-[acyl-carrier-protein] and UDP-N-acetyl-alpha-D-glucosamine: step 6/6. Functionally, transfers the gamma-phosphate of ATP to the 4'-position of a tetraacyldisaccharide 1-phosphate intermediate (termed DS-1-P) to form tetraacyldisaccharide 1,4'-bis-phosphate (lipid IVA). The polypeptide is Tetraacyldisaccharide 4'-kinase (Hamiltonella defensa subsp. Acyrthosiphon pisum (strain 5AT)).